The primary structure comprises 443 residues: Serine/threonine-protein kinase 40 (443 aa).

Over residues 1-11 (MKRRASERDAG) the composition is skewed to basic and acidic residues. The tract at residues 1–26 (MKRRASERDAGETSARSKALCSSISG) is disordered. Over residues 14–26 (SARSKALCSSISG) the composition is skewed to polar residues. The 298-residue stretch at 35–332 (FILGPRLGNS…EVLESLGAII (298 aa)) folds into the Protein kinase domain. Residues 41–49 (LGNSPVPSI) and Lys-66 contribute to the ATP site. The active-site Proton acceptor is Asp-197.

Belongs to the protein kinase superfamily. CAMK Ser/Thr protein kinase family.

Its subcellular location is the nucleus. The protein localises to the cytoplasm. It catalyses the reaction L-seryl-[protein] + ATP = O-phospho-L-seryl-[protein] + ADP + H(+). The enzyme catalyses L-threonyl-[protein] + ATP = O-phospho-L-threonyl-[protein] + ADP + H(+). Its function is as follows. May be a negative regulator of NF-kappa-B and p53-mediated gene transcription. The polypeptide is Serine/threonine-protein kinase 40 (stk40) (Xenopus tropicalis (Western clawed frog)).